The primary structure comprises 286 residues: Shikimate dehydrogenase (NADP(+)) (286 aa).

Residues 19–21 and T66 contribute to the shikimate site; that span reads SLS. K70 acts as the Proton acceptor in catalysis. N91 and D107 together coordinate shikimate. NADP(+)-binding positions include 129-133 and L229; that span reads GSGGA. Y231 lines the shikimate pocket. An NADP(+)-binding site is contributed by G252.

Belongs to the shikimate dehydrogenase family. As to quaternary structure, homodimer.

It catalyses the reaction shikimate + NADP(+) = 3-dehydroshikimate + NADPH + H(+). It participates in metabolic intermediate biosynthesis; chorismate biosynthesis; chorismate from D-erythrose 4-phosphate and phosphoenolpyruvate: step 4/7. In terms of biological role, involved in the biosynthesis of the chorismate, which leads to the biosynthesis of aromatic amino acids. Catalyzes the reversible NADPH linked reduction of 3-dehydroshikimate (DHSA) to yield shikimate (SA). In Prochlorococcus marinus (strain MIT 9215), this protein is Shikimate dehydrogenase (NADP(+)).